A 201-amino-acid chain; its full sequence is Small ribosomal subunit protein uS4c (201 aa).

A disordered region spans residues 20–44; sequence GLTSKRPRAGSDLRNQSRSGKKSQY. In terms of domain architecture, S4 RNA-binding spans 89 to 152; the sequence is MRLDNILFRL…NSRTLVQNLL (64 aa).

It belongs to the universal ribosomal protein uS4 family. As to quaternary structure, part of the 30S ribosomal subunit. Contacts protein S5. The interaction surface between S4 and S5 is involved in control of translational fidelity.

It is found in the plastid. The protein localises to the chloroplast. In terms of biological role, one of the primary rRNA binding proteins, it binds directly to 16S rRNA where it nucleates assembly of the body of the 30S subunit. Functionally, with S5 and S12 plays an important role in translational accuracy. This is Small ribosomal subunit protein uS4c (rps4) from Aethionema cordifolium (Lebanon stonecress).